The sequence spans 57 residues: Small nuclear protein PRAC1 (57 aa).

The segment at 38 to 57 (RSDGSACNSGISGGRGRKIP) is disordered.

Highly expressed in prostate, rectum, and distal colon, and weakly expressed in bladder. Expressed in prostate cancer cell lines.

Its subcellular location is the nucleus. The sequence is that of Small nuclear protein PRAC1 (PRAC1) from Homo sapiens (Human).